The sequence spans 208 residues: Protein-L-isoaspartate O-methyltransferase (208 aa).

S59 is an active-site residue.

It belongs to the methyltransferase superfamily. L-isoaspartyl/D-aspartyl protein methyltransferase family.

It is found in the cytoplasm. It carries out the reaction [protein]-L-isoaspartate + S-adenosyl-L-methionine = [protein]-L-isoaspartate alpha-methyl ester + S-adenosyl-L-homocysteine. Functionally, catalyzes the methyl esterification of L-isoaspartyl residues in peptides and proteins that result from spontaneous decomposition of normal L-aspartyl and L-asparaginyl residues. It plays a role in the repair and/or degradation of damaged proteins. This is Protein-L-isoaspartate O-methyltransferase from Vibrio campbellii (strain ATCC BAA-1116).